The chain runs to 136 residues: Holo-[acyl-carrier-protein] synthase (136 aa).

The Mg(2+) site is built by Asp-8 and Glu-58.

The protein belongs to the P-Pant transferase superfamily. AcpS family. Mg(2+) serves as cofactor.

The protein resides in the cytoplasm. It catalyses the reaction apo-[ACP] + CoA = holo-[ACP] + adenosine 3',5'-bisphosphate + H(+). Functionally, transfers the 4'-phosphopantetheine moiety from coenzyme A to a Ser of acyl-carrier-protein. The sequence is that of Holo-[acyl-carrier-protein] synthase from Leuconostoc mesenteroides subsp. mesenteroides (strain ATCC 8293 / DSM 20343 / BCRC 11652 / CCM 1803 / JCM 6124 / NCDO 523 / NBRC 100496 / NCIMB 8023 / NCTC 12954 / NRRL B-1118 / 37Y).